The primary structure comprises 873 residues: Leucine--tRNA ligase (873 aa).

Positions 42 to 52 (PYPSGKLHMGH) match the 'HIGH' region motif. The tract at residues 624–643 (PVEIGGTEKMSKSKNNGVDP) is disordered. The 'KMSKS' region signature appears at 632–636 (KMSKS). Residue Lys635 coordinates ATP.

The protein belongs to the class-I aminoacyl-tRNA synthetase family.

It is found in the cytoplasm. It carries out the reaction tRNA(Leu) + L-leucine + ATP = L-leucyl-tRNA(Leu) + AMP + diphosphate. The polypeptide is Leucine--tRNA ligase (Pseudomonas aeruginosa (strain LESB58)).